The primary structure comprises 92 residues: Large ribosomal subunit protein uL23c (92 aa).

Belongs to the universal ribosomal protein uL23 family. Part of the 50S ribosomal subunit.

The protein resides in the plastid. It is found in the chloroplast. Binds to 23S rRNA. The sequence is that of Large ribosomal subunit protein uL23c (rpl23) from Mesostigma viride (Green alga).